The primary structure comprises 144 residues: uncharacterized protein (144 aa).

2 helical membrane-spanning segments follow: residues 76–96 (LLSA…VTML) and 105–125 (ILRA…VKSY).

This sequence belongs to the RseC family.

The protein resides in the cell inner membrane. This is an uncharacterized protein from Haemophilus influenzae (strain ATCC 51907 / DSM 11121 / KW20 / Rd).